A 179-amino-acid polypeptide reads, in one-letter code: Large ribosomal subunit protein uL6 (179 aa).

Belongs to the universal ribosomal protein uL6 family. Part of the 50S ribosomal subunit.

Its function is as follows. This protein binds to the 23S rRNA, and is important in its secondary structure. It is located near the subunit interface in the base of the L7/L12 stalk, and near the tRNA binding site of the peptidyltransferase center. The sequence is that of Large ribosomal subunit protein uL6 from Beutenbergia cavernae (strain ATCC BAA-8 / DSM 12333 / CCUG 43141 / JCM 11478 / NBRC 16432 / NCIMB 13614 / HKI 0122).